We begin with the raw amino-acid sequence, 356 residues long: Phosphate acyltransferase (356 aa).

This sequence belongs to the PlsX family. Homodimer. Probably interacts with PlsY.

Its subcellular location is the cytoplasm. It catalyses the reaction a fatty acyl-[ACP] + phosphate = an acyl phosphate + holo-[ACP]. Its pathway is lipid metabolism; phospholipid metabolism. Its function is as follows. Catalyzes the reversible formation of acyl-phosphate (acyl-PO(4)) from acyl-[acyl-carrier-protein] (acyl-ACP). This enzyme utilizes acyl-ACP as fatty acyl donor, but not acyl-CoA. In Bartonella bacilliformis (strain ATCC 35685 / KC583 / Herrer 020/F12,63), this protein is Phosphate acyltransferase.